The following is a 65-amino-acid chain: Urease accessory protein UreI (65 aa).

Its function is as follows. Probably facilitates nickel incorporation. May constitute a multicomponent high-affinity nickel transporter. Not essential for the expression of catalytically active urease. This chain is Urease accessory protein UreI (ureI), found in Bacillus sp. (strain TB-90).